A 5233-amino-acid polypeptide reads, in one-letter code: E3 ubiquitin-protein ligase highwire (5233 aa).

Residues 197–230 (VVGGPGLPAEKRPRRDSANSDADSDTEEPTEREP) form a disordered region. The span at 205–214 (AEKRPRRDSA) shows a compositional bias: basic and acidic residues. 2 positions are modified to phosphoserine: S213 and S216. RCC1 repeat units lie at residues 615–666 (NGRV…ALLV), 669–724 (DGTV…FVTK), and 768–818 (KGQL…DKRL). The tract at residues 680–700 (RGEDGDSSKNRRQPKAVKPKK) is disordered. Positions 689–700 (NRRQPKAVKPKK) are enriched in basic residues. The interval 900–950 (TELKPPPSDVQQRQQRSKTLIMRRKERKGELETGAAGGGAATPTDLDKDPP) is disordered. A compositionally biased stretch (polar residues) spans 908–917 (DVQQRQQRSK). 3 RCC1 repeats span residues 931 to 983 (ETGA…VLTL), 984 to 1033 (AGEV…LLTS), and 1035 to 1084 (GMVY…TVAP). 2 disordered regions span residues 1051–1109 (LPSD…EMPP) and 1287–1327 (AAAA…PPQL). Residues 1092 to 1103 (RSQSPANVQPSG) are compositionally biased toward polar residues. Residues 1287–1302 (AAAAAVAAPGTPVSAG) are compositionally biased toward low complexity. Residues 1436–1587 (NRFDNFGGGW…GQIPAILYRL (152 aa)) form a PHR domain 1 region. Residues 1681–1718 (SSTSVATGGGSNAAHGSGVVTTAKSVQSKPNKDKNTPR) form a disordered region. Residues 1699–1709 (VVTTAKSVQSK) show a composition bias toward polar residues. The tract at residues 2014-2169 (ARFARCDVSR…GQLPCILYYS (156 aa)) is PHR domain 2. 2 disordered regions span residues 2329–2353 (SADL…VPIN) and 2580–2604 (NGAG…NTHQ). The span at 2336-2350 (QSQSVSQSQSQSQSV) shows a compositional bias: low complexity. The interval 2885 to 4082 (AEVSAPGPNL…FVSSLNPTGG (1198 aa)) is required for interaction with Rae1. Residues 2906–3000 (WGGMAPPPRI…LEEVYRVDVK (95 aa)) form a Filamin repeat. Disordered regions lie at residues 3005–3024 (PPPT…SKLR), 3117–3210 (KGVG…EPEQ), 3277–3333 (GGQD…ASET), 3348–3378 (TTTG…PMGP), 3551–3587 (PRLL…DLGR), and 3901–3936 (ASLA…APPV). The span at 3176 to 3191 (KHADLAEREAQVQEER) shows a compositional bias: basic and acidic residues. The segment covering 3192–3210 (EKEEEQVDDEDADDREPEQ) has biased composition (acidic residues). Positions 3282-3292 (PRGNGNRSQQE) are enriched in polar residues. The span at 3348-3371 (TTTGQGEQQSELQLATTSTASSAS) shows a compositional bias: low complexity. Residues 3917–3932 (QHHQQQQMNLQLQQHQ) are compositionally biased toward low complexity. In terms of domain architecture, DOC spans 4195-4374 (HNQVHSVATG…KHQPHLRLSH (180 aa)). Disordered stretches follow at residues 4633–4655 (ASTG…GAVL) and 4680–4702 (LRSR…ALPP). The segment covering 4638–4652 (SGSGGVSGSSSGNGG) has biased composition (gly residues). 10 residues coordinate Zn(2+): C4991, C4994, C5009, H5011, H5014, C5017, C5038, C5041, C5101, and C5104. The RING-type; atypical zinc-finger motif lies at 4991–5042 (CMICFVEALSCAPSIHLECGHVFHYHCCKAVLEKRWSGPRITFGFSLCPICK). The tandem cysteine domain stretch occupies residues 5096–5231 (YAYYVCFKCQ…LGCGVCRNAQ (136 aa)). C5115 is an active-site residue. Residues C5130, C5133, C5142, H5145, C5154, C5157, and C5158 each coordinate Zn(2+). C5165 is an active-site residue. 7 residues coordinate Zn(2+): C5172, C5175, C5193, C5207, H5213, C5224, and C5227.

The protein belongs to the RING-Cys relay (RCR) family. As to quaternary structure, component of an E3 ubiquitin ligase complex composed of hiw, Rae1 and Fsn. Interacts with Rae1; the interaction with Rae1 may protect hiw from autophagy-mediated degradation. Express throughout the nervous system. Stage 13 embryos show expression in the central nervous system (CNS) at the longitudinal axon tracts around which the synaptic neuropil forms. Expression outside the CNS starts at stage 16 in presynaptic terminals at the periactive zone which surround the active zone. Expression at neuromuscular junctions (NMJ) and in the CNS is also seen in third instar larvae (at protein level).

It localises to the synapse. It is found in the cell projection. Its subcellular location is the axon. It catalyses the reaction [E2 ubiquitin-conjugating enzyme]-S-ubiquitinyl-L-cysteine + [acceptor protein]-L-threonine = [E2 ubiquitin-conjugating enzyme]-L-cysteine + [acceptor protein]-3-O-ubiquitinyl-L-threonine.. Its pathway is protein modification; protein ubiquitination. In terms of biological role, atypical E3 ubiquitin-protein ligase which specifically mediates ubiquitination of threonine and serine residues on target proteins, instead of ubiquitinating lysine residues. Shows esterification activity towards both threonine and serine, with a preference for threonine, and acts via two essential catalytic cysteine residues that relay ubiquitin to its substrate via thioester intermediates. Required in the presynaptic motoneuron to down-regulate the levels of wnd and restrain synaptic terminal growth at the neuromuscular junction (NMJ) together with Rae1 and Fsn. The polypeptide is E3 ubiquitin-protein ligase highwire (Drosophila melanogaster (Fruit fly)).